Reading from the N-terminus, the 272-residue chain is NAD kinase (272 aa).

The active-site Proton acceptor is Asp-50. NAD(+) is bound by residues 50–51, 126–127, Arg-152, Asp-154, 165–170, and Ala-189; these read DG, NE, and TAYNKS.

It belongs to the NAD kinase family. Requires a divalent metal cation as cofactor.

It is found in the cytoplasm. The catalysed reaction is NAD(+) + ATP = ADP + NADP(+) + H(+). Functionally, involved in the regulation of the intracellular balance of NAD and NADP, and is a key enzyme in the biosynthesis of NADP. Catalyzes specifically the phosphorylation on 2'-hydroxyl of the adenosine moiety of NAD to yield NADP. In Streptococcus pneumoniae serotype 19F (strain G54), this protein is NAD kinase.